A 1239-amino-acid chain; its full sequence is DNA-directed RNA polymerase subunit beta (1239 aa).

The disordered stretch occupies residues 1182–1239; that stretch reads IEGAENQLEDKEEKEEEKEENYKEDSDEYDDLREEDVEPDLEELSLDDLDLDDFGDEH. 2 stretches are compositionally biased toward acidic residues: residues 1191-1200 and 1206-1239; these read DKEEKEEEKE and DSDE…GDEH.

This sequence belongs to the RNA polymerase beta chain family. In terms of assembly, the RNAP catalytic core consists of 2 alpha, 1 beta, 1 beta' and 1 omega subunit. When a sigma factor is associated with the core the holoenzyme is formed, which can initiate transcription.

The catalysed reaction is RNA(n) + a ribonucleoside 5'-triphosphate = RNA(n+1) + diphosphate. DNA-dependent RNA polymerase catalyzes the transcription of DNA into RNA using the four ribonucleoside triphosphates as substrates. This is DNA-directed RNA polymerase subunit beta from Clostridium botulinum (strain Loch Maree / Type A3).